Reading from the N-terminus, the 148-residue chain is Sec-independent protein translocase protein TatB (148 aa).

A helical transmembrane segment spans residues Phe2–Gly22. 2 stretches are compositionally biased toward basic and acidic residues: residues Val100–Glu110 and Met128–Thr148. The tract at residues Val100–Thr148 is disordered.

It belongs to the TatB family. In terms of assembly, the Tat system comprises two distinct complexes: a TatABC complex, containing multiple copies of TatA, TatB and TatC subunits, and a separate TatA complex, containing only TatA subunits. Substrates initially bind to the TatABC complex, which probably triggers association of the separate TatA complex to form the active translocon.

Its subcellular location is the cell membrane. Part of the twin-arginine translocation (Tat) system that transports large folded proteins containing a characteristic twin-arginine motif in their signal peptide across membranes. Together with TatC, TatB is part of a receptor directly interacting with Tat signal peptides. TatB may form an oligomeric binding site that transiently accommodates folded Tat precursor proteins before their translocation. In Streptomyces avermitilis (strain ATCC 31267 / DSM 46492 / JCM 5070 / NBRC 14893 / NCIMB 12804 / NRRL 8165 / MA-4680), this protein is Sec-independent protein translocase protein TatB.